Here is a 380-residue protein sequence, read N- to C-terminus: Peroxisomal membrane protein PEX13 (380 aa).

A disordered region spans residues 1-30 (MSDSSAPDLPSKPSSLNAGQSSSLQTTNTG). The Lumenal segment spans residues 1–230 (MSDSSAPDLP…NKNTNKLSLK (230 aa)). Positions 12–30 (KPSSLNAGQSSSLQTTNTG) are enriched in polar residues. Residues 231–251 (PLLLFLAAVVGFPYLLKKLIA) traverse the membrane as a helical segment. Over 252 to 380 (HLAETSQMNG…DSTEFQKMKT (129 aa)) the chain is Cytoplasmic. An SH3 domain is found at 277-344 (TKLEFARALY…PYNYVEIIER (68 aa)).

It belongs to the peroxin-13 family. Interacts (via SH3 domain) with PEX14 (via SH3-binding motif); forming the PEX13-PEX14 docking complex.

It localises to the peroxisome membrane. Its function is as follows. Component of the PEX13-PEX14 docking complex, a translocon channel that specifically mediates the import of peroxisomal cargo proteins bound to PEX5 receptor. The PEX13-PEX14 docking complex forms a large import pore which can be opened to a diameter of about 9 nm. Mechanistically, PEX5 receptor along with cargo proteins associates with the PEX14 subunit of the PEX13-PEX14 docking complex in the cytosol, leading to the insertion of the receptor into the organelle membrane with the concomitant translocation of the cargo into the peroxisome matrix. The polypeptide is Peroxisomal membrane protein PEX13 (PEX13) (Komagataella pastoris (Yeast)).